The chain runs to 379 residues: Epoxyqueuosine reductase (379 aa).

Catalysis depends on Asp140, which acts as the Proton donor. The 4Fe-4S ferredoxin-type domain occupies 184–214 (FEPDTPASDLCGSCNQCVKACPTGSLLGEGK). Positions 194, 197, 200, 204, 220, 246, 249, and 253 each coordinate [4Fe-4S] cluster. One copy of the HEAT-like PBS-type repeat lies at 307–332 (QRNAIIILARYKDKTAVPDLIDCLQN).

The protein belongs to the QueG family. In terms of assembly, monomer. Cob(II)alamin serves as cofactor. [4Fe-4S] cluster is required as a cofactor.

The protein localises to the cytoplasm. It catalyses the reaction epoxyqueuosine(34) in tRNA + AH2 = queuosine(34) in tRNA + A + H2O. Its pathway is tRNA modification; tRNA-queuosine biosynthesis. Functionally, catalyzes the conversion of epoxyqueuosine (oQ) to queuosine (Q), which is a hypermodified base found in the wobble positions of tRNA(Asp), tRNA(Asn), tRNA(His) and tRNA(Tyr). In Listeria monocytogenes serovar 1/2a (strain ATCC BAA-679 / EGD-e), this protein is Epoxyqueuosine reductase.